We begin with the raw amino-acid sequence, 144 residues long: Large ribosomal subunit protein uL15 (144 aa).

The disordered stretch occupies residues 1 to 52; that stretch reads MRLNTLSPANGARHSRKRLGRGIGSGFGKTSGRGHKGQKSRSGSSIRRGFEG. Gly residues predominate over residues 21–31; the sequence is RGIGSGFGKTS.

This sequence belongs to the universal ribosomal protein uL15 family. Part of the 50S ribosomal subunit.

In terms of biological role, binds to the 23S rRNA. This is Large ribosomal subunit protein uL15 from Buchnera aphidicola subsp. Acyrthosiphon pisum (strain 5A).